We begin with the raw amino-acid sequence, 418 residues long: L-rhamnose isomerase (418 aa).

Residues H261, D293, and D295 each contribute to the Mn(2+) site.

Belongs to the rhamnose isomerase family. The cofactor is Mn(2+).

It localises to the cytoplasm. The catalysed reaction is L-rhamnopyranose = L-rhamnulose. It functions in the pathway carbohydrate degradation; L-rhamnose degradation; glycerone phosphate from L-rhamnose: step 1/3. Functionally, catalyzes the interconversion of L-rhamnose and L-rhamnulose. The polypeptide is L-rhamnose isomerase (Clostridium beijerinckii (strain ATCC 51743 / NCIMB 8052) (Clostridium acetobutylicum)).